The chain runs to 440 residues: 5-hydroxytryptamine receptor 6 (440 aa).

At Met1–Gly27 the chain is on the extracellular side. Residues Trp28 to Cys52 traverse the membrane as a helical segment. Residues Thr53–Asn62 lie on the Cytoplasmic side of the membrane. A helical membrane pass occupies residues Phe63 to Leu88. Residues Tyr89–Arg96 lie on the Extracellular side of the membrane. Residues Gly97 to Leu122 traverse the membrane as a helical segment. An intrachain disulfide couples Cys99 to Cys180. Residue Asp106 participates in serotonin binding. Residues Asp123–Arg142 lie on the Cytoplasmic side of the membrane. Residues Ala143–His167 traverse the membrane as a helical segment. Residues Glu168–Ser185 are Extracellular-facing. The chain crosses the membrane as a helical span at residues Leu186–Cys209. The Cytoplasmic segment spans residues Arg210–Ala266. Residues Ser267–Val293 form a helical membrane-spanning segment. A serotonin-binding site is contributed by Asn288. At Cys294–Pro299 the chain is on the extracellular side. Residues Gly300–Phe323 traverse the membrane as a helical segment. The Cytoplasmic segment spans residues Met324–Asn440. The tract at residues Ala346–Leu392 is disordered. Over residues Ser347–Ser358 the composition is skewed to polar residues. Over residues Pro362–Pro371 the composition is skewed to low complexity.

This sequence belongs to the G-protein coupled receptor 1 family. In terms of assembly, interacts with MTOR, RPTOR and NF1. Interacts with CDK5. Expressed in several human brain regions, most prominently in the caudate nucleus.

It is found in the cell membrane. Functionally, G-protein coupled receptor for 5-hydroxytryptamine (serotonin), a biogenic hormone that functions as a neurotransmitter, a hormone and a mitogen. Also has a high affinity for tricyclic psychotropic drugs. Ligand binding causes a conformation change that triggers signaling via guanine nucleotide-binding proteins (G proteins) and modulates the activity of downstream effectors. HTR6 is coupled to G(s) G alpha proteins and mediates activation of adenylate cyclase activity. Controls pyramidal neurons migration during corticogenesis, through the regulation of CDK5 activity. Is an activator of mTOR signaling. In Homo sapiens (Human), this protein is 5-hydroxytryptamine receptor 6.